The following is a 3916-amino-acid chain: Fusarin C synthetase (3916 aa).

A Ketosynthase family 3 (KS3) domain is found at 9-440 (KEPIAIIGTS…GTNVHAIIEQ (432 aa)). Active-site for beta-ketoacyl synthase activity residues include C182, H319, and H360. The tract at residues 548–866 (VFTGQGAQWP…QGTVARNIHD (319 aa)) is malonyl-CoA:ACP transacylase (MAT) domain. Residues 935-1068 (HPLLGARSVE…GQLRVEFGCS (134 aa)) are N-terminal hotdog fold. The dehydratase (DH) domain stretch occupies residues 935–1228 (HPLLGARSVE…GLTCTSLLRP (294 aa)). Positions 935-1231 (HPLLGARSVE…CTSLLRPGPS (297 aa)) constitute a PKS/mFAS DH domain. The active-site Proton acceptor; for dehydratase activity is H967. Positions 1084 to 1231 (LTSVNMERFY…CTSLLRPGPS (148 aa)) are C-terminal hotdog fold. D1141 functions as the Proton donor; for dehydratase activity in the catalytic mechanism. Positions 1347–1575 (IQAVGENLPS…VNDFVDAEKY (229 aa)) are C-methyltransferase (CMeT) domain. A ketoreductase (KR) domain 1 region spans residues 2092-2266 (TYLLIGCTGG…AASVMHIGMV (175 aa)). Positions 2372–2449 (EILAVVEEEF…ELCSTVVSHL (78 aa)) constitute a Carrier 1 domain. At S2409 the chain carries O-(pantetheine 4'-phosphoryl)serine. The interval 2487 to 2510 (NEPFTIRNSPNSTQVTSEAGVDED) is disordered. The span at 2492–2503 (IRNSPNSTQVTS) shows a compositional bias: polar residues. Residues 2522–2806 (PLSFAQERLW…VNLLPLRLKI (285 aa)) are condensation. An adenylation region spans residues 2975–3385 (EFVVKQPDDT…RIAGDSQIKL (411 aa)). The Carrier 2 domain maps to 3493-3570 (KPLTETQERL…EMAAKIDGST (78 aa)). S3530 is modified (O-(pantetheine 4'-phosphoryl)serine). Positions 3612–3833 (LTGATGFLGV…DFVPVDVVAA (222 aa)) are thiolester reductase (R) domain.

In the C-terminal section; belongs to the NRP synthetase family.

The protein operates within mycotoxin biosynthesis. Functionally, fusarin C synthetase; part of the gene cluster that mediates the biosynthesis of the mycotoxin fusarin C. Within the cluster, FUS1, FUS2, FUS8 and FUS9 are sufficient for fusarin production. The roles of the other FUS members are yet undetermined. The fusarin C synthetase FUS1 is responsible for the condensation of one acetyl-coenzyme A (CoA) unit with six malonyl-CoA units and the amide linkage of the arising heptaketide and homoserine, subsequently releasing the first intermediate, prefusarin, as an alcohol with an open ring structure. The cytochrome P450 monooxygenase FUS8 participates in multiple oxidation processes at carbon C-20 and is able to use the FUS1 product as substrate, resulting in formation of 20-hydroxy-prefusarin. This reaction seems to be essential before the 2-pyrrolidone ring closure can be catalyzed by FUS2, generating 20-hydroxy-fusarin. FUS8 is able to further oxidizes carbon C-20 after ring closure, resulting in the formation of carboxy-fusarin C. As the last step, FUS9 methylates the hydroxyl group at C-21 to generate fusarin C. Fusarin C can then rearrange to epi-fusarin C, the (z)-isomers, and fusarin A and fusarin D. This is Fusarin C synthetase from Gibberella fujikuroi (strain CBS 195.34 / IMI 58289 / NRRL A-6831) (Bakanae and foot rot disease fungus).